Here is a 224-residue protein sequence, read N- to C-terminus: PHD finger-containing protein 5 (224 aa).

The PHD-type zinc-finger motif lies at 31 to 81; that stretch reads KKPCEVCGSDANELLMMTCFMCRDTREHTYCARVMFQRVPRLWICEECRDF. The Zn(2+) site is built by Cys-34, Cys-37, Cys-49, Cys-52, His-58, Cys-61, Cys-75, and Cys-78. Positions 116-137 are disordered; sequence PRTNQVVDNHQDPPIDQTDPSS.

Interacts directly with AIPP3/BDT1.

Its function is as follows. Together with AIPP3/BDT1, cooperates to form a BAH-PHD bivalent histone reader complex able to read histone H3 lysine 27 trimethylation (H3K27me3) histone marks in order to regulate transcription, especially to prevent early flowering; promotes AIPP3/BDT1 binding to H3K27me3. In Arabidopsis thaliana (Mouse-ear cress), this protein is PHD finger-containing protein 5.